The following is a 92-amino-acid chain: Kappa-scoloptoxin(15)-Ssd2a (92 aa).

Residues 1 to 20 (MKMVYLGLFLIITSCVISSG) form the signal peptide.

In terms of processing, contains 3 disulfide bonds. Expressed by the venom gland.

The protein localises to the secreted. In terms of biological role, inhibits voltage-gated potassium channels (Kv) (IC(50)=about 10 nM), when tested on DRG neurons. The chain is Kappa-scoloptoxin(15)-Ssd2a from Scolopendra dehaani (Thai centipede).